The chain runs to 490 residues: MERWWFNSMLFKKEFERRCGLNKSMGSLGPIENTSEDPNLKVKNIHSCSNVDYLFGVKDIWNFISNDTFLVSDRNGDSYSIYFDIENHIFEVDNDHSFLSELESSFYSYRNSSYLNNGFRGEDPYYNSYMSYMYDTQYSWNNHINSCIDNYLQSQICIDTSIISGSESNGDSYIYRAICSGQSLNSSENEGSSRRTRTKDSDLTIRESSNDLEVTQKYKHLWVQCENCYGLNYKKFLKSKMNICEQCGYHLKMSSSDRIELLIDPGTWDPMDEDMVSLDPIEFHSEEEPYKDRIDSYQRKTGLTEAVQTGIGQLNGIPVAIGVMDFQFMGGSMGSVVGEKITRLIEHAANQNLPLMIVCASGGARMQEGSLSLMQMAKISSALYDYQLNKKLFYVSILTSPTTGGVTASFGMLGDIIIAEPNAYIAFAGKRVIEQTLNKTVPEGSQAAEYLFQKGLFDLIVPRNLLKSVLSELFKLHAFFPLNQKSSKIK.

The CoA carboxyltransferase N-terminal domain occupies 221-490 (LWVQCENCYG…PLNQKSSKIK (270 aa)). Zn(2+) contacts are provided by C225, C228, C244, and C247. Residues 225–247 (CENCYGLNYKKFLKSKMNICEQC) form a C4-type zinc finger.

The protein belongs to the AccD/PCCB family. Acetyl-CoA carboxylase is a heterohexamer composed of biotin carboxyl carrier protein, biotin carboxylase and 2 subunits each of ACCase subunit alpha and ACCase plastid-coded subunit beta (accD). Zn(2+) is required as a cofactor. In terms of tissue distribution, expressed in leaves, ripening and mature fruit.

The protein resides in the plastid. It localises to the chloroplast stroma. The protein localises to the chromoplast stroma. The enzyme catalyses N(6)-carboxybiotinyl-L-lysyl-[protein] + acetyl-CoA = N(6)-biotinyl-L-lysyl-[protein] + malonyl-CoA. The protein operates within lipid metabolism; malonyl-CoA biosynthesis; malonyl-CoA from acetyl-CoA: step 1/1. Component of the acetyl coenzyme A carboxylase (ACC) complex. Biotin carboxylase (BC) catalyzes the carboxylation of biotin on its carrier protein (BCCP) and then the CO(2) group is transferred by the transcarboxylase to acetyl-CoA to form malonyl-CoA. Is up-regulated upon chromoplast differentiation, presumably for fatty acid biosynthesis. In Solanum lycopersicum (Tomato), this protein is Acetyl-coenzyme A carboxylase carboxyl transferase subunit beta, chloroplastic.